Reading from the N-terminus, the 44-residue chain is MSKLVQAISDAVQAQQNQDWAKLGTSIVGIVENGVGILGKLFGF.

N-formylmethionine is present on methionine 1.

This sequence belongs to the staphylococcal hemolytic protein family.

It localises to the secreted. Functionally, has hemolytic activity and also inhibits the growth of gonococci. The chain is Antibacterial protein 3 from Staphylococcus haemolyticus.